We begin with the raw amino-acid sequence, 149 residues long: Large ribosomal subunit protein uL15 (149 aa).

The span at 1-29 (MVSHLKKTRKLRGHVSHGHGRVGKHRKGG) shows a compositional bias: basic residues. The segment at 1–38 (MVSHLKKTRKLRGHVSHGHGRVGKHRKGGCRGGRGKAG) is disordered.

The protein belongs to the universal ribosomal protein uL15 family.

The protein is Large ribosomal subunit protein uL15 (RPL27A) of Tetrahymena thermophila.